A 370-amino-acid chain; its full sequence is Mitochondrial carrier protein SCaMC-3L (370 aa).

Solcar repeat units lie at residues 90 to 176 (EALW…CKNY), 184 to 269 (PPFQ…LQCF), and 280 to 367 (PSGL…MKKT). The next 6 membrane-spanning stretches (helical) occupy residues 96-113 (LLSG…TAPL), 151-170 (GNGI…FSVF), 194-207 (SLAV…INPM), 245-263 (YLPN…LAVY), 282-306 (GLVS…LTLV), and 342-361 (GMTP…YVVY).

This sequence belongs to the mitochondrial carrier (TC 2.A.29) family.

The protein localises to the mitochondrion inner membrane. The catalysed reaction is Mg(2+)(out) + phosphate(in) + ATP(out) = Mg(2+)(in) + phosphate(out) + ATP(in). It carries out the reaction ADP(out) + phosphate(in) + H(+)(out) = ADP(in) + phosphate(out) + H(+)(in). Calcium-independent ATP-Mg/Pi exchanger that catalyzes the electroneutral exchange of Mg-ATP or free ADP against an hydrogenphosphate and participates in the net transport of adenine nucleotides across the mitochondria inner membrane. The protein is Mitochondrial carrier protein SCaMC-3L of Homo sapiens (Human).